The primary structure comprises 588 residues: Calicin (588 aa).

A BTB domain is found at 28 to 98 (WDMALTVDHH…FYSGKVVISE (71 aa)). One can recognise a BACK domain in the interval 133-235 (CLRYLFLAEL…NAVSNKTLMF (103 aa)). Ser-149 bears the Phosphoserine mark. Kelch repeat units lie at residues 280–327 (SVVI…AAGR), 328–375 (YIYI…TCGG), 377–423 (VYSV…TKGD), 425–475 (NLYI…SFHQ), 476–525 (DNIL…IGDS), and 526–580 (KVFV…LAKL).

In terms of assembly, interacts with CYLC1; the interaction may be relevant for proper acrosome attachment to the nuclear envelope. In terms of tissue distribution, expressed in testis and in spermatozoa.

It localises to the cytoplasm. The protein localises to the cytoskeleton. It is found in the perinuclear theca. Its subcellular location is the calyx. Required for both nuclear and acrosomal shaping during spermiogenesis. This chain is Calicin (Ccin), found in Mus musculus (Mouse).